The primary structure comprises 695 residues: Threonine--tRNA ligase (695 aa).

Residues 1 to 66 form the TGS domain; it reads MSAPARPAPA…DTDVEVTPVA (66 aa). Positions 263–569 are catalytic; that stretch reads DHRKLGVELD…LTEHYAGAFP (307 aa). 3 residues coordinate Zn(2+): Cys-368, His-419, and His-546.

The protein belongs to the class-II aminoacyl-tRNA synthetase family. In terms of assembly, homodimer. The cofactor is Zn(2+).

Its subcellular location is the cytoplasm. The enzyme catalyses tRNA(Thr) + L-threonine + ATP = L-threonyl-tRNA(Thr) + AMP + diphosphate + H(+). In terms of biological role, catalyzes the attachment of threonine to tRNA(Thr) in a two-step reaction: L-threonine is first activated by ATP to form Thr-AMP and then transferred to the acceptor end of tRNA(Thr). Also edits incorrectly charged L-seryl-tRNA(Thr). In Mycolicibacterium gilvum (strain PYR-GCK) (Mycobacterium gilvum (strain PYR-GCK)), this protein is Threonine--tRNA ligase.